Reading from the N-terminus, the 244-residue chain is Small ribosomal subunit protein uS2 (244 aa).

Belongs to the universal ribosomal protein uS2 family.

The polypeptide is Small ribosomal subunit protein uS2 (Hydrogenovibrio crunogenus (strain DSM 25203 / XCL-2) (Thiomicrospira crunogena)).